The primary structure comprises 90 residues: N(2)-fixation sustaining protein CowN (90 aa).

The protein belongs to the CowN family.

Its function is as follows. Is required to sustain N(2)-dependent growth in the presence of low levels of carbon monoxide (CO). Probably acts by protecting the N(2) fixation ability of the nitrogenase complex, which is inactivated in the presence of CO. In Methylocella silvestris (strain DSM 15510 / CIP 108128 / LMG 27833 / NCIMB 13906 / BL2), this protein is N(2)-fixation sustaining protein CowN.